A 115-amino-acid chain; its full sequence is Large ribosomal subunit protein bL19 (115 aa).

Belongs to the bacterial ribosomal protein bL19 family.

In terms of biological role, this protein is located at the 30S-50S ribosomal subunit interface and may play a role in the structure and function of the aminoacyl-tRNA binding site. The protein is Large ribosomal subunit protein bL19 of Bacillus velezensis (strain DSM 23117 / BGSC 10A6 / LMG 26770 / FZB42) (Bacillus amyloliquefaciens subsp. plantarum).